Reading from the N-terminus, the 171-residue chain is Protein phosphatase 1 regulatory subunit 1A (171 aa).

M1 bears the N-acetylmethionine mark. The tract at residues M1 to V171 is disordered. Positions K9 to F12 are essential for activity. Positions P19 to I29 are enriched in basic and acidic residues. Position 35 is a phosphothreonine (T35). The segment at T42–R54 is essential for activity. 4 positions are modified to phosphoserine: S43, S46, S47, and S67. Residues G122–Q146 are compositionally biased toward polar residues. The segment at T143–V171 is interaction with PPP1R15A.

It belongs to the protein phosphatase inhibitor 1 family. As to quaternary structure, interacts with PPP1R15A. Phosphorylation of Thr-35 is required for activity.

In terms of biological role, inhibitor of protein-phosphatase 1. This protein may be important in hormonal control of glycogen metabolism. Hormones that elevate intracellular cAMP increase I-1 activity in many tissues. I-1 activation may impose cAMP control over proteins that are not directly phosphorylated by PKA. Following a rise in intracellular calcium, I-1 is inactivated by calcineurin (or PP2B). Does not inhibit type-2 phosphatases. This chain is Protein phosphatase 1 regulatory subunit 1A (Ppp1r1a), found in Mus musculus (Mouse).